The sequence spans 572 residues: 3-ketosteroid oxygenase (572 aa).

2 consecutive transmembrane segments (helical) span residues 52–72 (AFAL…RNFL) and 84–104 (YFMR…FIRI).

Belongs to the cytochrome P450 family. In terms of tissue distribution, expressed in the 2 embryonic head hypodermal cells XXXL/R.

The protein resides in the membrane. The catalysed reaction is 5alpha-cholest-7-en-3-one + 3 reduced [NADPH--hemoprotein reductase] + 3 O2 = (25S)-Delta7-dafachronate + 3 oxidized [NADPH--hemoprotein reductase] + 4 H2O + 4 H(+). The enzyme catalyses cholest-4-en-3-one + 3 reduced [NADPH--hemoprotein reductase] + 3 O2 = (25S)-3-oxocholest-4-en-26-oate + 3 oxidized [NADPH--hemoprotein reductase] + 4 H2O + 4 H(+). The protein operates within steroid hormone biosynthesis; dafachronic acid biosynthesis. Converts the 3-keto steroids 4-cholesten-3-one and lathosterone into the carboxylic metabolites 3-keto-4-cholestenate (Delta(4)-dafachronic acid, Delta(4)-DA) and 3-keto-7,(5a)-cholestenate (Delta(7)-dafachronic acid, Delta(7)-DA) respectively, by catalyzing successive oxidations at C-26. Dafachronic acids bind directly to the nuclear hormone receptor (NHR) DAF-12, suppressing dauer formation and inducing reproductive growth. In a non-cell autonomous manner, negatively regulates body wall muscle arm extensions to motor neurons probably by preventing daf-12 isoform b activation. May be involved in thermotolerance. This chain is 3-ketosteroid oxygenase (daf-9), found in Caenorhabditis elegans.